Reading from the N-terminus, the 1255-residue chain is Period circadian protein homolog 2 (1255 aa).

Residues 1-79 (MNGYAEFPPS…EPPDARQSPD (79 aa)) are disordered. The span at 35–56 (SSGSSGHETNENCSTGRDSQGS) shows a compositional bias: polar residues. Residues 111–120 (LIKTLKELKV) carry the Nuclear export signal 1 motif. The 68-residue stretch at 181–248 (VTSEHIVKNA…FHSFTSPYKL (68 aa)) folds into the PAS 1 domain. An LXXLL motif is present at residues 308–312 (LCCLL). A PAS 2 domain is found at 321–387 (YEAPRIPPEK…MLAIHKKILQ (67 aa)). One can recognise a PAC domain in the interval 395 to 438 (YSPIRFRARNGEYITLDTSWSSFINPWSRKISFIIGRHKVRVGP). The Nuclear export signal 2 signature appears at 462-471 (LTEQIHRLLL). 2 disordered regions span residues 473-557 (PVPH…AVPA) and 617-646 (RSSD…SRTG). Residues 480 to 484 (SGYGS) are important for protein stability. Positions 504–516 (NGHEDSRRRRAEI) are enriched in basic and acidic residues. The segment at 512–717 (RRAEICKNGN…ALACGLSQEK (206 aa)) is CSNK1E binding domain. A phosphoserine mark is found at serine 527, serine 530, serine 533, and serine 540. Residues 529–541 (YSHESGEQKKKSV) show a composition bias toward basic and acidic residues. A phosphoserine mark is found at serine 662, serine 696, serine 700, serine 714, serine 766, and serine 771. Disordered stretches follow at residues 764–838 (ERSK…DTSQ) and 931–985 (FPSH…QSRS). Positions 789–805 (KKTGKNRKLKSKRVKPR) match the Nuclear localization signal motif. The span at 790-803 (KTGKNRKLKSKRVK) shows a compositional bias: basic residues. 2 stretches are compositionally biased toward polar residues: residues 829–838 (TAWSPSDTSQ) and 936–956 (TLTS…TSIP). The interaction with PPARG stretch occupies residues 888–1071 (QFAVQPPPFP…NEDLCSASGS (184 aa)). The residue at position 945 (serine 945) is a Phosphoserine. A compositionally biased stretch (low complexity) spans 959–972 (PCACPATRATPPSA). Serine 977 carries the phosphoserine modification. The Nuclear export signal 3 motif lies at 989–996 (LQLNLLQL). A disordered region spans residues 1018–1050 (VGADCKPGTSRDQQPKAPLTRDEPSDTQNSDAL). Positions 1057-1061 (LNLLL) match the LXXLL motif. The interval 1077 to 1106 (LGSGSLGCDASPSGAGSSDTSHTSKYFGSI) is disordered. Over residues 1090–1106 (GAGSSDTSHTSKYFGSI) the composition is skewed to polar residues. At serine 1124 the chain carries Phosphoserine. Positions 1155-1255 (SRNLEAVLKE…PLNHRIEEQT (101 aa)) are CRY binding domain. The segment at 1231 to 1255 (GLSEVSDTKEDENGSPLNHRIEEQT) is disordered.

In terms of assembly, homodimer. Component of the circadian core oscillator, which includes the CRY proteins, CLOCK or NPAS2, BMAL1 or BMAL2, CSNK1D and/or CSNK1E, TIMELESS, and the PER proteins. Interacts with CLOCK-BMAL1 (off DNA). Interacts with BMAL2. Interacts directly with PER1 and PER3, and through a C-terminal domain, with CRY1 and CRY2. Interacts (via PAS 2 domain) with TIMELESS. Interacts with NFIL3. Different large complexes have been identified with different repressive functions. The core of PER complexes is composed of at least PER1, PER2, PER3, CRY1, CRY2, CSNK1D and/or CSNK1E. The large PER complex involved in the repression of transcriptional termination is composed of at least PER2, CDK9, DDX5, DHX9, NCBP1 and POLR2A (active). The large PER complex involved in the histone deacetylation is composed of at least HDAC1, PER2, SFPQ and SIN3A. The large PER complex involved in the histone methylation is composed of at least PER2, CBX3, TRIM28, SUV39H1 and/or SUV39H2; CBX3 mediates the formation of the complex. Interacts with SETX; the interaction inhibits termination of circadian target genes. Interacts with the nuclear receptors HNF4A, NR1D1, NR4A2, RORA, PPARA, PPARG and THRA; the interaction with at least PPARG is ligand dependent. Interacts with PML. Interacts (phosphorylated) with BTRC and FBXW11; the interactions trigger proteasomal degradation. Interacts with NONO and SFPQ. Interacts with CAVIN3. Interacts with MAGEL2. Interacts with MAP1LC3B. Interacts with HNF4A. Acetylated. Deacetylated by SIRT1, resulting in decreased protein stability. Deacetylated by SIRT6, preventing its degradation by the proteasome, resulting in increased protein stability. Post-translationally, phosphorylated by CSNK1E and CSNK1D. Phosphorylation results in PER2 protein degradation. May be dephosphorylated by PP1. In terms of processing, ubiquitinated, leading to its proteasomal degradation. Ubiquitination may be inhibited by CRY1. In terms of tissue distribution, widely expressed. Found in heart, brain, placenta, lung, liver, skeleatal muscle, kidney and pancreas. High levels in skeletal muscle and pancreas. Low levels in lung. Isoform 2 is expressed in keratinocytes (at protein level).

It is found in the nucleus. The protein localises to the cytoplasm. The protein resides in the perinuclear region. It localises to the nucleolus. Transcriptional repressor which forms a core component of the circadian clock. The circadian clock, an internal time-keeping system, regulates various physiological processes through the generation of approximately 24 hour circadian rhythms in gene expression, which are translated into rhythms in metabolism and behavior. It is derived from the Latin roots 'circa' (about) and 'diem' (day) and acts as an important regulator of a wide array of physiological functions including metabolism, sleep, body temperature, blood pressure, endocrine, immune, cardiovascular, and renal function. Consists of two major components: the central clock, residing in the suprachiasmatic nucleus (SCN) of the brain, and the peripheral clocks that are present in nearly every tissue and organ system. Both the central and peripheral clocks can be reset by environmental cues, also known as Zeitgebers (German for 'timegivers'). The predominant Zeitgeber for the central clock is light, which is sensed by retina and signals directly to the SCN. The central clock entrains the peripheral clocks through neuronal and hormonal signals, body temperature and feeding-related cues, aligning all clocks with the external light/dark cycle. Circadian rhythms allow an organism to achieve temporal homeostasis with its environment at the molecular level by regulating gene expression to create a peak of protein expression once every 24 hours to control when a particular physiological process is most active with respect to the solar day. Transcription and translation of core clock components (CLOCK, NPAS2, BMAL1, BMAL2, PER1, PER2, PER3, CRY1 and CRY2) plays a critical role in rhythm generation, whereas delays imposed by post-translational modifications (PTMs) are important for determining the period (tau) of the rhythms (tau refers to the period of a rhythm and is the length, in time, of one complete cycle). A diurnal rhythm is synchronized with the day/night cycle, while the ultradian and infradian rhythms have a period shorter and longer than 24 hours, respectively. Disruptions in the circadian rhythms contribute to the pathology of cardiovascular diseases, cancer, metabolic syndrome and aging. A transcription/translation feedback loop (TTFL) forms the core of the molecular circadian clock mechanism. Transcription factors, CLOCK or NPAS2 and BMAL1 or BMAL2, form the positive limb of the feedback loop, act in the form of a heterodimer and activate the transcription of core clock genes and clock-controlled genes (involved in key metabolic processes), harboring E-box elements (5'-CACGTG-3') within their promoters. The core clock genes: PER1/2/3 and CRY1/2 which are transcriptional repressors form the negative limb of the feedback loop and interact with the CLOCK|NPAS2-BMAL1|BMAL2 heterodimer inhibiting its activity and thereby negatively regulating their own expression. This heterodimer also activates nuclear receptors NR1D1/2 and RORA/B/G, which form a second feedback loop and which activate and repress BMAL1 transcription, respectively. PER1 and PER2 proteins transport CRY1 and CRY2 into the nucleus with appropriate circadian timing, but also contribute directly to repression of clock-controlled target genes through interaction with several classes of RNA-binding proteins, helicases and others transcriptional repressors. PER appears to regulate circadian control of transcription by at least three different modes. First, interacts directly with the CLOCK-BMAL1 at the tail end of the nascent transcript peak to recruit complexes containing the SIN3-HDAC that remodel chromatin to repress transcription. Second, brings H3K9 methyltransferases such as SUV39H1 and SUV39H2 to the E-box elements of the circadian target genes, like PER2 itself or PER1. The recruitment of each repressive modifier to the DNA seems to be very precisely temporally orchestrated by the large PER complex, the deacetylases acting before than the methyltransferases. Additionally, large PER complexes are also recruited to the target genes 3' termination site through interactions with RNA-binding proteins and helicases that may play a role in transcription termination to regulate transcription independently of CLOCK-BMAL1 interactions. Recruitment of large PER complexes to the elongating polymerase at PER and CRY termination sites inhibited SETX action, impeding RNA polymerase II release and thereby repressing transcriptional reinitiation. May propagate clock information to metabolic pathways via the interaction with nuclear receptors. Coactivator of PPARA and corepressor of NR1D1, binds rhythmically at the promoter of nuclear receptors target genes like BMAL1 or G6PC1. Directly and specifically represses PPARG proadipogenic activity by blocking PPARG recruitment to target promoters and thereby inhibiting transcriptional activation. Required for fatty acid and lipid metabolism, is involved as well in the regulation of circulating insulin levels. Plays an important role in the maintenance of cardiovascular functions through the regulation of NO and vasodilatatory prostaglandins production in aortas. Controls circadian glutamate uptake in synaptic vesicles through the regulation of VGLUT1 expression. May also be involved in the regulation of inflammatory processes. Represses the CLOCK-BMAL1 induced transcription of BHLHE40/DEC1 and ATF4. Negatively regulates the formation of the TIMELESS-CRY1 complex by competing with TIMELESS for binding to CRY1. The protein is Period circadian protein homolog 2 (PER2) of Homo sapiens (Human).